The following is a 55-amino-acid chain: Ferredoxin (55 aa).

4Fe-4S ferredoxin-type domains lie at 2–26 (YKITDECIACGSCADQCPVEAISEG) and 27–55 (SIYEIDEALCTDCGACADQCPVEAIVPED). Residues cysteine 8, cysteine 11, cysteine 14, cysteine 18, cysteine 36, cysteine 39, cysteine 42, and cysteine 46 each contribute to the [4Fe-4S] cluster site.

[4Fe-4S] cluster serves as cofactor.

Its function is as follows. Ferredoxins are iron-sulfur proteins that transfer electrons in a wide variety of metabolic reactions. The sequence is that of Ferredoxin from Butyribacterium methylotrophicum.